The following is a 355-amino-acid chain: MARAVRAGILGASGMTGGELLRILASHPGVEVEWATSREYAGKPVHTAHPHLRGFYTGLKYTSIDKIDIGEVDVVFNALPHGVGASIVAEAYENGVRVVDLSADYRLRDQSLYPKLYGFKHPRPDLLEEAIYALPEIYGEKLRGARLAAVPGCNATAAILAAAPLVASKIIDMDVGIIVDVKAASSEAGSKPSRHSIHPLREGSARPYTPWGHRHAAEAVQVLRDLVGRGIRLSLVPHAVSMTRGVLASAHALLRDNIGFSEAVRAYASFYKDSQIVRVKPMAPGLPVDPPDVKNVIGSMFAEVGFAVEEESGRITGFAAIDNLVRGAAGQAVYAMNAMLGFDEWEGLRSPPLRP.

13-16 contacts NADP(+); that stretch reads SGMT. Residue Cys-153 is part of the active site. Residue Asn-323 participates in NADP(+) binding.

The protein belongs to the NAGSA dehydrogenase family. Type 1 subfamily. LysY sub-subfamily.

It is found in the cytoplasm. The catalysed reaction is [amino-group carrier protein]-C-terminal-N-(1-carboxy-5-oxopentan-1-yl)-L-glutamine + phosphate + NADP(+) = [amino-group carrier protein]-C-terminal-N-(1-carboxy-5-phosphooxy-5-oxopentan-1-yl)-L-glutamine + NADPH + H(+). It carries out the reaction [amino-group carrier protein]-C-terminal-gamma-(L-glutamyl-5-semialdehyde)-L-glutamate + phosphate + NADP(+) = [amino-group carrier protein]-C-terminal-gamma-(5-phospho-L-glutamyl)-L-glutamate + NADPH + H(+). It participates in amino-acid biosynthesis; L-lysine biosynthesis via AAA pathway; L-lysine from L-alpha-aminoadipate (Thermus route): step 3/5. It functions in the pathway amino-acid biosynthesis; L-arginine biosynthesis. Functionally, involved in both the arginine and lysine biosynthetic pathways. This is Putative [LysW]-L-2-aminoadipate/[LysW]-L-glutamate phosphate reductase from Aeropyrum pernix (strain ATCC 700893 / DSM 11879 / JCM 9820 / NBRC 100138 / K1).